The sequence spans 135 residues: Class I hydrophobin 2 (135 aa).

A signal peptide spans 1-20 (MFARLTSTLFALAAVSAVFA). Intrachain disulfides connect Cys29–Cys114, Cys36–Cys107, Cys37–Cys73, and Cys115–Cys128. N-linked (GlcNAc...) asparagine glycans are attached at residues Asn117 and Asn132.

This sequence belongs to the fungal hydrophobin family. As to quaternary structure, self-assembles to form functional amyloid fibrils called rodlets. Self-assembly into fibrillar rodlets occurs spontaneously at hydrophobic:hydrophilic interfaces and the rodlets further associate laterally to form amphipathic monolayers.

The protein resides in the secreted. It is found in the cell wall. Aerial growth, conidiation, and dispersal of filamentous fungi in the environment rely upon a capability of their secreting small amphipathic proteins called hydrophobins (HPBs) with low sequence identity. Class I can self-assemble into an outermost layer of rodlet bundles on aerial cell surfaces, conferring cellular hydrophobicity that supports fungal growth, development and dispersal; whereas Class II form highly ordered films at water-air interfaces through intermolecular interactions but contribute nothing to the rodlet structure. The sequence is that of Class I hydrophobin 2 from Coprinopsis cinerea (strain Okayama-7 / 130 / ATCC MYA-4618 / FGSC 9003) (Inky cap fungus).